A 113-amino-acid polypeptide reads, in one-letter code: MNMTLNKRWCLTAILALSAVVYTSSSFAATDRLVIESGDSAQSRQQASMEKEQWNDTRSLRQKVNKRAEKEWDKTDVAFDAQDNCQKSANVNAYWEPNTLRCLDRRTGRAINP.

The signal sequence occupies residues 1–28 (MNMTLNKRWCLTAILALSAVVYTSSSFA). Residues 38 to 61 (GDSAQSRQQASMEKEQWNDTRSLR) are disordered. Polar residues predominate over residues 39–48 (DSAQSRQQAS). Residues 49-59 (MEKEQWNDTRS) are compositionally biased toward basic and acidic residues.

The protein belongs to the UPF0482 family.

In Klebsiella pneumoniae (strain 342), this protein is UPF0482 protein KPK_2871.